Consider the following 144-residue polypeptide: uncharacterized protein (144 aa).

This is an uncharacterized protein from Methanocaldococcus jannaschii (strain ATCC 43067 / DSM 2661 / JAL-1 / JCM 10045 / NBRC 100440) (Methanococcus jannaschii).